A 158-amino-acid chain; its full sequence is GTP-dependent dephospho-CoA kinase (158 aa).

6 residues coordinate GTP: Asp35, Val36, Asp54, Lys56, Glu109, and Asp132.

Belongs to the GTP-dependent DPCK family.

The catalysed reaction is 3'-dephospho-CoA + GTP = GDP + CoA + H(+). The protein operates within cofactor biosynthesis; coenzyme A biosynthesis. In terms of biological role, catalyzes the GTP-dependent phosphorylation of the 3'-hydroxyl group of dephosphocoenzyme A to form coenzyme A (CoA). This chain is GTP-dependent dephospho-CoA kinase, found in Methanococcus vannielii (strain ATCC 35089 / DSM 1224 / JCM 13029 / OCM 148 / SB).